We begin with the raw amino-acid sequence, 185 residues long: Ribosome-recycling factor (185 aa).

Belongs to the RRF family.

The protein resides in the cytoplasm. Responsible for the release of ribosomes from messenger RNA at the termination of protein biosynthesis. May increase the efficiency of translation by recycling ribosomes from one round of translation to another. The chain is Ribosome-recycling factor from Pseudomonas syringae pv. tomato (strain ATCC BAA-871 / DC3000).